The primary structure comprises 218 residues: Capsid protein (218 aa).

The residue at position 1 (methionine 1) is an N-acetylmethionine; by host. Positions 1 to 10 (MDKSESASAG) are enriched in low complexity. A disordered region spans residues 1–30 (MDKSESASAGRNRRRRPRRGSRSASSSSDA). Residues 11–21 (RNRRRRPRRGS) are compositionally biased toward basic residues.

The protein belongs to the cucumovirus capsid protein family.

The protein resides in the virion. Its function is as follows. Capsid protein. Probably binds RNA and plays a role in packaging. This Cucumis sativus (Cucumber) protein is Capsid protein.